The chain runs to 107 residues: Putative double-stranded DNA mimic protein NTHI1680 (107 aa).

This sequence belongs to the putative dsDNA mimic protein family.

Functionally, may act as a double-stranded DNA (dsDNA) mimic. Probably regulates the activity of a dsDNA-binding protein. This chain is Putative double-stranded DNA mimic protein NTHI1680, found in Haemophilus influenzae (strain 86-028NP).